A 463-amino-acid polypeptide reads, in one-letter code: ATP-dependent rRNA helicase SPB4 (463 aa).

Positions 4–32 (KGIEDVAMNGRLKKEIEENGFGKMTEVQL) match the Q motif motif. The 171-residue stretch at 35–205 (IPEVLKGKDV…RVFLRNPVSI (171 aa)) folds into the Helicase ATP-binding domain. 48-55 (SPTGTGKT) is an ATP binding site. The short motif at 153 to 156 (DEAD) is the DEAD box element. A Helicase C-terminal domain is found at 226-382 (KLLVLMDIVT…DIKSMISPEL (157 aa)). Positions 444-463 (RDGKKRALPKKKYRKKRAIK) are disordered. Over residues 446 to 463 (GKKRALPKKKYRKKRAIK) the composition is skewed to basic residues.

The protein belongs to the DEAD box helicase family. DDX55/SPB4 subfamily. In terms of assembly, component of pre-60S ribosomal complexes.

It is found in the nucleus. It localises to the nucleolus. It catalyses the reaction ATP + H2O = ADP + phosphate + H(+). Its function is as follows. ATP-binding RNA helicase involved in the biogenesis of 60S ribosomal subunits. Binds 90S pre-ribosomal particles and dissociates from pre-60S ribosomal particles after processing of 27SB pre-rRNA. Required for the normal formation of 18S rRNA through the processing of pre-rRNAs at sites A0, A1 and A2, and the normal formation of 25S and 5.8S rRNAs through the processing of pre-rRNAs at sites C1 and C2. This is ATP-dependent rRNA helicase SPB4 from Encephalitozoon cuniculi (strain GB-M1) (Microsporidian parasite).